A 268-amino-acid chain; its full sequence is Nickel import ATP-binding protein NikE (268 aa).

Positions 4-252 (LNVSGLSHHY…SSDAGRVLQN (249 aa)) constitute an ABC transporter domain. ATP is bound at residue 45 to 52 (GRSGCGKS).

Belongs to the ABC transporter superfamily. Nickel importer (TC 3.A.1.5.3) family. The complex is composed of two ATP-binding proteins (NikD and NikE), two transmembrane proteins (NikB and NikC) and a solute-binding protein (NikA).

It localises to the cell inner membrane. It catalyses the reaction Ni(2+)(out) + ATP + H2O = Ni(2+)(in) + ADP + phosphate + H(+). Functionally, part of the ABC transporter complex NikABCDE involved in nickel import. Responsible for energy coupling to the transport system. This is Nickel import ATP-binding protein NikE from Shigella sonnei (strain Ss046).